The following is a 533-amino-acid chain: uncharacterized protein (533 aa).

This is an uncharacterized protein from Clostridium beijerinckii (strain ATCC 51743 / NCIMB 8052) (Clostridium acetobutylicum).